A 266-amino-acid polypeptide reads, in one-letter code: Putative carbamate hydrolase RutD (266 aa).

The protein belongs to the AB hydrolase superfamily. Hydrolase RutD family.

The catalysed reaction is carbamate + 2 H(+) = NH4(+) + CO2. Functionally, involved in pyrimidine catabolism. May facilitate the hydrolysis of carbamate, a reaction that can also occur spontaneously. In Escherichia coli O127:H6 (strain E2348/69 / EPEC), this protein is Putative carbamate hydrolase RutD.